Here is a 141-residue protein sequence, read N- to C-terminus: Hemoglobin subunit alpha-D (141 aa).

The Globin domain occupies 1–141 (VLTGEDKKHV…VAAVLAEKYR (141 aa)). Positions 58 and 87 each coordinate heme b.

Belongs to the globin family. In terms of assembly, heterotetramer of two alpha-D chains and two beta chains. Red blood cells.

Involved in oxygen transport from the lung to the various peripheral tissues. This chain is Hemoglobin subunit alpha-D (HBAD), found in Turdus merula (Common blackbird).